Reading from the N-terminus, the 475-residue chain is UDP-glycosyltransferase 101 (475 aa).

His15 functions as the Proton acceptor in the catalytic mechanism. Position 15 (His15) interacts with an anthocyanidin. The active-site Charge relay is Asp117. Ala345, Gln347, His362, Trp365, Asn366, Ser367, and Glu370 together coordinate UDP-alpha-D-glucose. Gly385 is an an anthocyanidin binding site. UDP-alpha-D-glucose-binding residues include Glu386 and Gln387.

It belongs to the UDP-glycosyltransferase family.

The enzyme catalyses (20S)-protopanaxadiol + UDP-alpha-D-glucose = (20S)-ginsenoside C-K + UDP + H(+). It carries out the reaction (20S)-ginsenoside Rg3 + UDP-alpha-D-glucose = (20S)-ginsenoside Rd + UDP + H(+). The catalysed reaction is (20S)-protopanaxatriol + UDP-alpha-D-glucose = (20S)-ginsenoside F1 + UDP + H(+). It catalyses the reaction (20S)-ginsenoside F1 + UDP-alpha-D-glucose = (20S)-ginsenoside Rg1 + UDP + H(+). It functions in the pathway secondary metabolite biosynthesis; terpenoid biosynthesis. Component of the dammarane-type triterpene saponins (e.g. ginsenosides or panaxosides) biosynthetic pathway. Glycosyltransferase that catalyzes the biosynthesis of ginsenoside F1 from protopanaxatriol (PPT) and the conversion of ginsenoside F1 to ginsenoside Rg1. Triggers C20-OH glycosylation of ginsenoside Rg3 to produce ginsenoside Rd. Mediates the conversion of protopanaxadiol (PPD) to the ginsenoside compound K. This is UDP-glycosyltransferase 101 from Panax ginseng (Korean ginseng).